The sequence spans 218 residues: Small ribosomal subunit protein uS3c (218 aa).

In terms of domain architecture, KH type-2 spans 43-118 (IKNYVQKNTK…KFNIAITKIA (76 aa)).

This sequence belongs to the universal ribosomal protein uS3 family. In terms of assembly, part of the 30S ribosomal subunit.

The protein resides in the plastid. It is found in the chloroplast. This is Small ribosomal subunit protein uS3c (rps3) from Coffea arabica (Arabian coffee).